Consider the following 128-residue polypeptide: Large ribosomal subunit protein bL12 (128 aa).

It belongs to the bacterial ribosomal protein bL12 family. In terms of assembly, homodimer. Part of the ribosomal stalk of the 50S ribosomal subunit. Forms a multimeric L10(L12)X complex, where L10 forms an elongated spine to which 2 to 4 L12 dimers bind in a sequential fashion. Binds GTP-bound translation factors.

Functionally, forms part of the ribosomal stalk which helps the ribosome interact with GTP-bound translation factors. Is thus essential for accurate translation. This is Large ribosomal subunit protein bL12 from Kocuria rhizophila (strain ATCC 9341 / DSM 348 / NBRC 103217 / DC2201).